A 420-amino-acid chain; its full sequence is Replication factor C large subunit (420 aa).

46 to 53 (GVQGSGKT) is a binding site for ATP.

Belongs to the activator 1 small subunits family. RfcL subfamily. As to quaternary structure, heteromultimer composed of small subunits (RfcS) and large subunits (RfcL).

Its function is as follows. Part of the RFC clamp loader complex which loads the PCNA sliding clamp onto DNA. The chain is Replication factor C large subunit from Thermoplasma volcanium (strain ATCC 51530 / DSM 4299 / JCM 9571 / NBRC 15438 / GSS1).